The chain runs to 283 residues: MKTPFSKMDGLGNQIIVADMRESTHALTPQAILSLAADSQTYFDQIMAIHLPTKKEADFRIEIWNADGSMANACGNGTRCVIAWLTDHNYGEIFRLETPAGIVEGKRQIDNLISVDMGCPNFNAKEMPVSREIIDTNHVELTAGPLRDACLVSIGNLHAIFFVENDIQYIPLEKYGSKLEHDPLFPQRCNISIACVTSQESLNLRTWERGAGLTQACGSAACASAVAAYRRGLTKRNIDVNLPGGTLNIFYREDDHIIMTGPVKYGFSGFLNPLTGSYKKDDF.

The substrate site is built by asparagine 13, glutamine 45, and asparagine 65. The active-site Proton donor is the cysteine 74. Substrate is bound by residues glycine 75–asparagine 76, asparagine 156, asparagine 190, and glutamate 208–arginine 209. Residue cysteine 217 is the Proton acceptor of the active site. Glycine 218–serine 219 contributes to the substrate binding site.

Belongs to the diaminopimelate epimerase family. Homodimer.

It is found in the cytoplasm. It catalyses the reaction (2S,6S)-2,6-diaminopimelate = meso-2,6-diaminopimelate. It participates in amino-acid biosynthesis; L-lysine biosynthesis via DAP pathway; DL-2,6-diaminopimelate from LL-2,6-diaminopimelate: step 1/1. In terms of biological role, catalyzes the stereoinversion of LL-2,6-diaminopimelate (L,L-DAP) to meso-diaminopimelate (meso-DAP), a precursor of L-lysine and an essential component of the bacterial peptidoglycan. This Bartonella henselae (strain ATCC 49882 / DSM 28221 / CCUG 30454 / Houston 1) (Rochalimaea henselae) protein is Diaminopimelate epimerase.